Consider the following 340-residue polypeptide: Organic solute transporter subunit alpha (340 aa).

Residues 1 to 48 lie on the Extracellular side of the membrane; sequence MEPGRTQIKLDPRYTADLLEVLKTNYGIPSACFSQPPTAAQLLRALGP. A helical transmembrane segment spans residues 49–69; it reads VELALTSILTLLALGSIAIFL. Over 70-87 the chain is Cytoplasmic; that stretch reads EDAVYLYKNTLCPIKRRT. Residues 88 to 108 form a helical membrane-spanning segment; it reads LLWKSSAPTVVSVLCCFGLWI. Topologically, residues 109–118 are extracellular; it reads PRSLVLVEMT. The helical transmembrane segment at 119-139 threads the bilayer; the sequence is ITSFYAVCFYLLMLVMVEGFG. Residues 140 to 181 lie on the Cytoplasmic side of the membrane; that stretch reads GKEAVLRTLRDTPMMVHTGPCCCCCPCCPRLLLTRKKLQLLM. Residues 182-202 traverse the membrane as a helical segment; that stretch reads LGPFQYAFLKITLTLVGLFLV. Over 203–218 the chain is Extracellular; it reads PDGIYDPADISEGSTA. A helical membrane pass occupies residues 219-239; the sequence is LWINTFLGVSTLLALWTLGII. Over 240–255 the chain is Cytoplasmic; that stretch reads SRQARLHLGEQNMGAK. The chain crosses the membrane as a helical span at residues 256–276; that stretch reads FALFQVLLILTALQPSIFSVL. Over 277 to 294 the chain is Extracellular; it reads ANGGQIACSPPYSSKTRS. The chain crosses the membrane as a helical span at residues 295-317; that stretch reads QVMNCHLLILETFLMTVLTRMYY. Over 318–340 the chain is Cytoplasmic; it reads RRKDHKVGYETFSSPDLDLNLKA. Ser-330 carries the phosphoserine modification.

It belongs to the OST-alpha family. Interacts with SLC51B. The Ost-alpha/Ost-beta complex is a heterodimer composed of alpha (SLC51A) and beta (SLC51B) subunit. In terms of tissue distribution, widely expressed with a high expression in ileum. Expressed in testis, colon, liver, small intestine, kidney, ovary and adrenal gland; and at low levels in heart, lung, brain, pituitary, thyroid gland, uterus, prostate, mammary gland and fat.

It is found in the cell membrane. The protein resides in the endoplasmic reticulum membrane. It catalyses the reaction taurocholate(out) = taurocholate(in). The catalysed reaction is estrone 3-sulfate(out) = estrone 3-sulfate(in). It carries out the reaction dehydroepiandrosterone 3-sulfate(out) = dehydroepiandrosterone 3-sulfate(in). The enzyme catalyses tauroursodeoxycholate(out) = tauroursodeoxycholate(in). It catalyses the reaction glycoursodeoxycholate(out) = glycoursodeoxycholate(in). The catalysed reaction is glycocholate(out) = glycocholate(in). It carries out the reaction taurochenodeoxycholate(out) = taurochenodeoxycholate(in). The enzyme catalyses glycochenodeoxycholate(out) = glycochenodeoxycholate(in). It catalyses the reaction taurodeoxycholate(out) = taurodeoxycholate(in). The catalysed reaction is glycodeoxycholate(out) = glycodeoxycholate(in). It carries out the reaction prostaglandin E2(out) = prostaglandin E2(in). Functionally, essential component of the Ost-alpha/Ost-beta complex, a heterodimer that acts as the intestinal basolateral transporter responsible for bile acid export from enterocytes into portal blood. Efficiently transports the major species of bile acids (taurocholate). Taurine conjugates are transported more efficiently across the basolateral membrane than glycine-conjugated bile acids. Can also transport steroids such as estrone 3-sulfate and dehydroepiandrosterone 3-sulfate, therefore playing a role in the enterohepatic circulation of sterols. Able to transport eicosanoids such as prostaglandin E2. The sequence is that of Organic solute transporter subunit alpha (SLC51A) from Homo sapiens (Human).